A 431-amino-acid chain; its full sequence is Adenylosuccinate synthetase (431 aa).

Residues 13–19 (GDEGKGK) and 41–43 (GHT) each bind GTP. The Proton acceptor role is filled by D14. Residues D14 and G41 each contribute to the Mg(2+) site. IMP is bound by residues 14-17 (DEGK), 39-42 (NAGH), T130, R144, Q225, T240, and R304. Residue H42 is the Proton donor of the active site. 300-306 (ATTGRQR) is a binding site for substrate. Residues R306, 332–334 (KLD), and 414–416 (STG) each bind GTP.

Belongs to the adenylosuccinate synthetase family. Homodimer. Mg(2+) serves as cofactor.

The protein localises to the cytoplasm. The enzyme catalyses IMP + L-aspartate + GTP = N(6)-(1,2-dicarboxyethyl)-AMP + GDP + phosphate + 2 H(+). The protein operates within purine metabolism; AMP biosynthesis via de novo pathway; AMP from IMP: step 1/2. In terms of biological role, plays an important role in the de novo pathway of purine nucleotide biosynthesis. Catalyzes the first committed step in the biosynthesis of AMP from IMP. The polypeptide is Adenylosuccinate synthetase (Saccharophagus degradans (strain 2-40 / ATCC 43961 / DSM 17024)).